The sequence spans 349 residues: Replication-associated protein (349 aa).

A CRESS-DNA virus Rep endonuclease domain is found at Gln9–Phe117. Positions Phe16–Tyr19 match the RCR-1 motif. Positions 50, 58, and 60 each coordinate a divalent metal cation. Positions His58 to His60 match the RCR-2 motif. Catalysis depends on Tyr104, which acts as the For DNA cleavage activity. The short motif at Tyr104–Lys107 is the RCR-3 element. Asp108 is a binding site for a divalent metal cation. Residues Lys144–Lys154 form a binding to RBR1 region. Positions Lys157 to Ala177 are oligomerization. Gly223–Thr230 provides a ligand contact to ATP.

The protein belongs to the geminiviridae Rep protein family. In terms of assembly, homooligomer. Interacts with the replication enhancer protein (REn). Interacts with host retinoblastoma-related protein 1 (RBR1), and may thereby induce the transcription of host replicative enzymes even if the cell is not dividing anymore. Interacts with host PCNA. Interacts with host SCE1 protein. Mg(2+) is required as a cofactor. It depends on Mn(2+) as a cofactor.

The protein localises to the host nucleus. Its function is as follows. Essential for the replication of viral ssDNA. The closed circular ssDNA genome is first converted to a superhelical dsDNA. Rep binds a specific region at the genome origin of replication. It introduces an endonucleolytic nick within the conserved sequence 5'-TAATATTAC-3' in the intergenic region of the genome present in all geminiviruses, thereby initiating the rolling circle replication (RCR). Following cleavage, binds covalently to the 5'-phosphate of DNA as a tyrosyl ester. The cleavage gives rise to a free 3'-OH that serves as a primer for the cellular DNA polymerase. The polymerase synthesizes the (+) strand DNA by rolling circle mechanism. After one round of replication, a Rep-catalyzed nucleotidyl transfer reaction releases a circular single-stranded virus genome, thereby terminating the replication. Displays origin-specific DNA cleavage, nucleotidyl transferase, ATPase and helicase activities. This is Replication-associated protein from Solanum lycopersicum (Tomato).